The sequence spans 412 residues: Circumsporozoite protein (412 aa).

The first 18 residues, 1 to 18 (MMRKLAILSVSSFLFVEA), serve as a signal peptide directing secretion. Residues 69 to 328 (SRSLGENDDG…KNNNNEEPSD (260 aa)) form a disordered region. Positions 85–105 (NGREGKDEDKRDGNNEDNEKL) are enriched in basic and acidic residues. Positions 104 to 111 (KLRKPKHK) are required for the binding to heparan sulfate proteoglycans (HSPGs) on the surface of host hepatocytes. Positions 112–116 (KLKQP) are region I; contains the proteolytic cleavage site. Residues 120–288 (NPDPNANPNV…PNANPNANPN (169 aa)) show a composition bias toward low complexity. Tandem repeats lie at residues 123 to 126 (PNAN), 127 to 130 (PNVD), 131 to 134 (PNAN), 135 to 138 (PNVD), 139 to 142 (PNAN), 143 to 146 (PNVD), 147 to 150 (PNAN), 151 to 154 (PNAN), 155 to 158 (PNAN), 159 to 162 (PNAN), 163 to 166 (PNAN), 167 to 170 (PNAN), 171 to 174 (PNAN), 175 to 178 (PNAN), 179 to 182 (PNAN), 183 to 186 (PNAN), 187 to 190 (PNAN), 191 to 194 (PNAN), 195 to 198 (PNAN), 199 to 202 (PNAN), 203 to 206 (PNAN), 207 to 210 (PNVD), 211 to 214 (PNAN), 215 to 218 (PNAN), 219 to 222 (PNAN), 223 to 226 (PNAN), 227 to 230 (PNAN), 231 to 234 (PNAN), 235 to 238 (PNAN), 239 to 242 (PNAN), 243 to 246 (PNAN), 247 to 250 (PNAN), 251 to 254 (PNAN), 255 to 258 (PNAN), 259 to 262 (PNAN), 263 to 266 (PNAN), 267 to 270 (PNAN), 271 to 274 (PNAN), 275 to 278 (PNAN), 279 to 282 (PNAN), and 283 to 286 (PNAN). The tract at residues 123–286 (PNANPNVDPN…ANPNANPNAN (164 aa)) is 41 X 4 AA tandem repeats of P-N-[AV]-[ND]. The segment covering 289 to 304 (KNNQGNGQGHNMPNDP) has biased composition (polar residues). Over residues 310 to 324 (ENANANNAVKNNNNE) the composition is skewed to low complexity. In terms of domain architecture, TSP type-1 spans 337-390 (KIKNSISTEWSPCSVTCGNGIQVRIKPGSANKPKDELDYENDIEKKICKMEKCS). 2 disulfide bridges follow: Cys349–Cys384 and Cys353–Cys389. A glycan (O-linked (Fuc) threonine) is linked at Thr352. Cys389 carries the GPI-anchor amidated cysteine lipid modification. Residues 390–412 (SSVFNVVNSSIGLIMVLSFLFLN) constitute a propeptide, removed in mature form.

Belongs to the plasmodium circumsporozoite protein family. Post-translationally, during host cell invasion, proteolytically cleaved at the cell membrane in the region I by a papain-like cysteine protease of parasite origin. Cleavage is triggered by the sporozoite contact with highly sulfated heparan sulfate proteoglycans (HSPGs) present on the host hepatocyte cell surface. Cleavage exposes the TSP type-1 (TSR) domain and is required for productive invasion of host hepatocytes but not for adhesion to the host cell membrane. Cleavage is dispensable for sporozoite development in the oocyst, motility and for traversal of host and vector cells. O-glycosylated; maybe by POFUT2.

The protein resides in the cell membrane. It is found in the cytoplasm. Functionally, essential sporozoite protein. In the mosquito vector, required for sporozoite development in the oocyst, migration through the vector hemolymph and entry into the vector salivary glands. In the vertebrate host, required for sporozoite migration through the host dermis and infection of host hepatocytes. Binds to highly sulfated heparan sulfate proteoglycans (HSPGs) on the surface of host hepatocytes. In terms of biological role, in the vertebrate host, binds to highly sulfated heparan sulfate proteoglycans (HSPGs) on the surface of host hepatocytes and is required for sporozoite invasion of the host hepatocytes. The protein is Circumsporozoite protein of Plasmodium falciparum.